A 372-amino-acid polypeptide reads, in one-letter code: Transcription factor YY2 (372 aa).

The tract at residues 32-102 (MEDIPTESVQ…SDNQLGNDLE (71 aa)) is mediates transcriptional activation. Residues 126 to 136 (SAASTSTSTQS) are compositionally biased toward low complexity. 2 disordered regions span residues 126–172 (SAAS…WEQK) and 186–210 (TMWSPNDNNDQGAVGEGQAENPPDY). The span at 137-146 (RSKKPSKKPS) shows a compositional bias: basic residues. 2 stretches are compositionally biased toward polar residues: residues 154–165 (EANPAGSSSSLG) and 186–196 (TMWSPNDNNDQ). The tract at residues 237-372 (EFTKVKPKRS…LTHVKTKNNP (136 aa)) is mediates transcriptional repression. 4 C2H2-type zinc fingers span residues 254-278 (VPCSYSGCEKMFRDYAAMRKHLHIH), 283-305 (HVCAECGKAFLESSKLRRHQLVH), 311-335 (FQCTFEGCGKRFSLDFNLRTHLRIH), and 341-365 (FVCPFDVCNRKFAQSTNLKTHILTH).

The protein belongs to the YY transcription factor family. As to expression, expressed in kidney, liver, spleen and testis but not in colon.

It is found in the nucleus. Its function is as follows. Functions as a multifunctional transcription factor that may exhibit positive and negative control on a large number of genes. May antagonize YY1 and function in development and differentiation. This is Transcription factor YY2 (YY2) from Homo sapiens (Human).